A 177-amino-acid chain; its full sequence is Adenine phosphoribosyltransferase (177 aa).

It belongs to the purine/pyrimidine phosphoribosyltransferase family. Homodimer.

It localises to the cytoplasm. It carries out the reaction AMP + diphosphate = 5-phospho-alpha-D-ribose 1-diphosphate + adenine. It participates in purine metabolism; AMP biosynthesis via salvage pathway; AMP from adenine: step 1/1. Catalyzes a salvage reaction resulting in the formation of AMP, that is energically less costly than de novo synthesis. The polypeptide is Adenine phosphoribosyltransferase (Leuconostoc citreum (strain KM20)).